Here is a 385-residue protein sequence, read N- to C-terminus: Rubredoxin-NAD(+) reductase (385 aa).

Residues 8–11, 32–33, I79, E156, D275, and I293 contribute to the FAD site; these read AGTA and SR.

The protein belongs to the FAD-dependent oxidoreductase family. In terms of assembly, homodimer. The cofactor is FAD.

It localises to the cytoplasm. The enzyme catalyses 2 reduced [rubredoxin] + NAD(+) + H(+) = 2 oxidized [rubredoxin] + NADH. It participates in hydrocarbon metabolism; alkane degradation. Its function is as follows. Involved in the hydrocarbon hydroxylating system, which transfers electrons from NADH to rubredoxin reductase and then through rubredoxin to alkane 1 monooxygenase. In Pseudomonas putida (Arthrobacter siderocapsulatus), this protein is Rubredoxin-NAD(+) reductase (alkT).